Consider the following 918-residue polypeptide: Protein translocase subunit SecA (918 aa).

Residues Gln-87, Gly-105–Thr-109, and Asp-494 each bind ATP. Positions Lys-863–Val-883 are enriched in basic and acidic residues. Positions Lys-863–Lys-918 are disordered.

It belongs to the SecA family. As to quaternary structure, monomer and homodimer. Part of the essential Sec protein translocation apparatus which comprises SecA, SecYEG and auxiliary proteins SecDF. Other proteins may also be involved.

The protein resides in the cell inner membrane. It is found in the cytoplasm. The enzyme catalyses ATP + H2O + cellular proteinSide 1 = ADP + phosphate + cellular proteinSide 2.. Part of the Sec protein translocase complex. Interacts with the SecYEG preprotein conducting channel. Has a central role in coupling the hydrolysis of ATP to the transfer of proteins into and across the cell membrane, serving as an ATP-driven molecular motor driving the stepwise translocation of polypeptide chains across the membrane. This chain is Protein translocase subunit SecA, found in Leptospira biflexa serovar Patoc (strain Patoc 1 / Ames).